Consider the following 372-residue polypeptide: Queuine tRNA-ribosyltransferase (372 aa).

Asp92 functions as the Proton acceptor in the catalytic mechanism. Substrate is bound by residues 92–96 (DSGGF), Asp146, Gln188, and Gly215. Residues 246–252 (GIGTLRE) are RNA binding. Asp265 (nucleophile) is an active-site residue. Residues 270–274 (TRLGR) form an RNA binding; important for wobble base 34 recognition region. Zn(2+) is bound by residues Cys303, Cys305, Cys308, and His334.

The protein belongs to the queuine tRNA-ribosyltransferase family. As to quaternary structure, homodimer. Within each dimer, one monomer is responsible for RNA recognition and catalysis, while the other monomer binds to the replacement base PreQ1. It depends on Zn(2+) as a cofactor.

The enzyme catalyses 7-aminomethyl-7-carbaguanine + guanosine(34) in tRNA = 7-aminomethyl-7-carbaguanosine(34) in tRNA + guanine. It participates in tRNA modification; tRNA-queuosine biosynthesis. Catalyzes the base-exchange of a guanine (G) residue with the queuine precursor 7-aminomethyl-7-deazaguanine (PreQ1) at position 34 (anticodon wobble position) in tRNAs with GU(N) anticodons (tRNA-Asp, -Asn, -His and -Tyr). Catalysis occurs through a double-displacement mechanism. The nucleophile active site attacks the C1' of nucleotide 34 to detach the guanine base from the RNA, forming a covalent enzyme-RNA intermediate. The proton acceptor active site deprotonates the incoming PreQ1, allowing a nucleophilic attack on the C1' of the ribose to form the product. After dissociation, two additional enzymatic reactions on the tRNA convert PreQ1 to queuine (Q), resulting in the hypermodified nucleoside queuosine (7-(((4,5-cis-dihydroxy-2-cyclopenten-1-yl)amino)methyl)-7-deazaguanosine). The polypeptide is Queuine tRNA-ribosyltransferase (Synechococcus sp. (strain CC9311)).